Reading from the N-terminus, the 81-residue chain is Insulin (81 aa).

3 cysteine pairs are disulfide-bonded: cysteine 7–cysteine 67, cysteine 19–cysteine 80, and cysteine 66–cysteine 71. The propeptide at 33-58 (DVEQPLVNGPLHGEVGELPFQHEEYQ) is c peptide.

It belongs to the insulin family. As to quaternary structure, heterodimer of a B chain and an A chain linked by two disulfide bonds.

The protein localises to the secreted. In terms of biological role, insulin decreases blood glucose concentration. It increases cell permeability to monosaccharides, amino acids and fatty acids. It accelerates glycolysis, the pentose phosphate cycle, and glycogen synthesis in liver. The polypeptide is Insulin (INS) (Anas platyrhynchos (Mallard)).